We begin with the raw amino-acid sequence, 112 residues long: MAQRVTYRRRLAYNTRSNRTRIIKTPGNNIRYLHIKKLGTIPRCGDTGVPLQGIPALRPREFARLSHNKKTVQRAYGGCLSANAVKDRIVRAFLIEEQKIVKQKLKQLSSQK.

Belongs to the eukaryotic ribosomal protein eL34 family. As to quaternary structure, component of the large ribosomal subunit (LSU). Mature yeast ribosomes consist of a small (40S) and a large (60S) subunit. The 40S small subunit contains 1 molecule of ribosomal RNA (18S rRNA) and at least 33 different proteins. The large 60S subunit contains 3 rRNA molecules (25S, 5.8S and 5S rRNA) and at least 46 different proteins.

The protein resides in the cytoplasm. In terms of biological role, component of the ribosome, a large ribonucleoprotein complex responsible for the synthesis of proteins in the cell. The small ribosomal subunit (SSU) binds messenger RNAs (mRNAs) and translates the encoded message by selecting cognate aminoacyl-transfer RNA (tRNA) molecules. The large subunit (LSU) contains the ribosomal catalytic site termed the peptidyl transferase center (PTC), which catalyzes the formation of peptide bonds, thereby polymerizing the amino acids delivered by tRNAs into a polypeptide chain. The nascent polypeptides leave the ribosome through a tunnel in the LSU and interact with protein factors that function in enzymatic processing, targeting, and the membrane insertion of nascent chains at the exit of the ribosomal tunnel. The polypeptide is Large ribosomal subunit protein eL34A (rpl3401) (Schizosaccharomyces pombe (strain 972 / ATCC 24843) (Fission yeast)).